Reading from the N-terminus, the 570-residue chain is Proline--tRNA ligase (570 aa).

Belongs to the class-II aminoacyl-tRNA synthetase family. ProS type 1 subfamily. In terms of assembly, homodimer.

It localises to the cytoplasm. The enzyme catalyses tRNA(Pro) + L-proline + ATP = L-prolyl-tRNA(Pro) + AMP + diphosphate. Catalyzes the attachment of proline to tRNA(Pro) in a two-step reaction: proline is first activated by ATP to form Pro-AMP and then transferred to the acceptor end of tRNA(Pro). As ProRS can inadvertently accommodate and process non-cognate amino acids such as alanine and cysteine, to avoid such errors it has two additional distinct editing activities against alanine. One activity is designated as 'pretransfer' editing and involves the tRNA(Pro)-independent hydrolysis of activated Ala-AMP. The other activity is designated 'posttransfer' editing and involves deacylation of mischarged Ala-tRNA(Pro). The misacylated Cys-tRNA(Pro) is not edited by ProRS. The chain is Proline--tRNA ligase from Syntrophomonas wolfei subsp. wolfei (strain DSM 2245B / Goettingen).